The sequence spans 455 residues: Aminopeptidase YwaD (455 aa).

The signal sequence occupies residues 1 to 31 (MKKLLTVMTMAVLTAGTLLLPAQSVTPAAHA). Residues H250, D262, E295, D323, and H401 each contribute to the Zn(2+) site.

Belongs to the peptidase M28 family. M28B subfamily. Monomer. Zn(2+) serves as cofactor.

Its subcellular location is the secreted. It carries out the reaction Release of N-terminal Arg and Lys from oligopeptides when P1' is not Pro. Also acts on arylamides of Arg and Lys.. The enzyme catalyses Release of an N-terminal amino acid, preferentially leucine, but not glutamic or aspartic acids.. Its function is as follows. Catalyzes the hydrolysis of a range of N-terminal amino acids. This Bacillus subtilis (strain 168) protein is Aminopeptidase YwaD (ywaD).